We begin with the raw amino-acid sequence, 272 residues long: MRPSELTQLKQDGRAISILTAWDGLSAALVEAAGADVVLVGDSLAMVALCHATTLPVTVEQMLHHTQAVGRGFTRPLPQQPLVVCDLPFLSYQCGEDKAVAAAGSLLKHSCAAAVKLEGAEPEVLAVIERLVRMGIPVMGHLGLTPQAVHRLGYRRQAEDPRSQAQMLQQAKQLEQAGCFALVVEHVPSSIARCLSQQLTIPVIGIGAGEDCDGQVRVTADLLGLTPSQPPFSPPLIQGRQLCVEALQGWVKQLHQQAETATTTTSQPEPDC.

Mg(2+)-binding residues include Asp42 and Asp86. Residues 42–43 (DS), Asp86, and Lys116 contribute to the 3-methyl-2-oxobutanoate site. Mg(2+) is bound at residue Glu118. Glu185 (proton acceptor) is an active-site residue.

Belongs to the PanB family. Homodecamer; pentamer of dimers. It depends on Mg(2+) as a cofactor.

It localises to the cytoplasm. It carries out the reaction 3-methyl-2-oxobutanoate + (6R)-5,10-methylene-5,6,7,8-tetrahydrofolate + H2O = 2-dehydropantoate + (6S)-5,6,7,8-tetrahydrofolate. The protein operates within cofactor biosynthesis; (R)-pantothenate biosynthesis; (R)-pantoate from 3-methyl-2-oxobutanoate: step 1/2. Catalyzes the reversible reaction in which hydroxymethyl group from 5,10-methylenetetrahydrofolate is transferred onto alpha-ketoisovalerate to form ketopantoate. The protein is 3-methyl-2-oxobutanoate hydroxymethyltransferase of Prochlorococcus marinus (strain MIT 9303).